Here is a 326-residue protein sequence, read N- to C-terminus: MFDGRSDIYDSTSFAAELDDLYSCRSTGRENGRRSRVSTRGVHRDRCGSAAKRRSTKRRCELVARERDRYSLYLDYMASHPSDEISAVRELVVPLIKTTSITLPFDLNQTVADNCLSLSGMGYYLGIGGCCPTCTVSGEPRLHRADRAALILAYVQQLNNIYEYRGFLASVLAAAAQGDQAGVAASEGVQAERLLENVLAQPELFFAYHVLRDGGIQNVRVLFYRDLSVSGYMMYAVFPTKSVHLHYRLIDRLLAACPGYKIIAHVWQTAFVLVVRRDEGQQTDMDIPTVSAGDIYCKMCDLSFDGELLLEYKKLYAVFDDFLPPV.

The CCCH-type zinc finger occupies 115–244 (CLSLSGMGYY…YAVFPTKSVH (130 aa)).

It belongs to the herpesviridae NEC1 protein family. In terms of assembly, forms a heterohexameric complex with NEC2. Interacts with capsid vertex specific component 2/CVC2; this interaction directs the capsid to the host inner nuclear membrane to initiate budding. Phosphorylated at serine residues in the N-terminus. This phosphorylation regulates the localization within the inner nuclear membrane.

The protein localises to the host nucleus inner membrane. In terms of biological role, plays an essential role in virion nuclear egress, the first step of virion release from infected cell. Within the host nucleus, NEC1 interacts with the newly formed capsid through the vertexes and directs it to the inner nuclear membrane by associating with NEC2. Induces the budding of the capsid at the inner nuclear membrane as well as its envelopment into the perinuclear space. There, the NEC1/NEC2 complex promotes the fusion of the enveloped capsid with the outer nuclear membrane and the subsequent release of the viral capsid into the cytoplasm where it will reach the secondary budding sites in the host Golgi or trans-Golgi network. The polypeptide is Nuclear egress protein 1 (Equine herpesvirus 1 (strain Ab4p) (EHV-1)).